Consider the following 685-residue polypeptide: Acetate--CoA ligase [ADP-forming] I (685 aa).

The ATP-grasp domain occupies 477 to 513 (LPVLEAYGIEVAPYGIARNVDEARDIAESIGYPVVLK). ATP is bound at residue 503 to 514 (AESIGYPVVLKV).

The protein in the N-terminal section; belongs to the acetate CoA ligase alpha subunit family. It in the C-terminal section; belongs to the acetate CoA ligase beta subunit family. Homodimer.

The catalysed reaction is acetate + ATP + CoA = acetyl-CoA + ADP + phosphate. Its activity is regulated as follows. Activity requires divalent metal cations. Functionally, catalyzes the reversible formation of acetate and ATP from acetyl-CoA by using ADP and phosphate. Can use other substrates such as propionyl-CoA and butyryl-CoA, but not phenylacetyl-CoA. Seems to be involved primarily in the conversion of acetyl-CoA to acetate. Participates in the degradation of branched-chain amino acids via branched-chain-acyl-CoA esters. The chain is Acetate--CoA ligase [ADP-forming] I from Archaeoglobus fulgidus (strain ATCC 49558 / DSM 4304 / JCM 9628 / NBRC 100126 / VC-16).